A 653-amino-acid chain; its full sequence is Fructose-1,6-bisphosphatase class 3 (653 aa).

Belongs to the FBPase class 3 family. Mn(2+) serves as cofactor.

The enzyme catalyses beta-D-fructose 1,6-bisphosphate + H2O = beta-D-fructose 6-phosphate + phosphate. It participates in carbohydrate biosynthesis; gluconeogenesis. This Listeria monocytogenes serotype 4b (strain CLIP80459) protein is Fructose-1,6-bisphosphatase class 3.